The sequence spans 562 residues: Arginine--tRNA ligase 1 (562 aa).

The short motif at 122 to 132 is the 'HIGH' region element; the sequence is PNIAKPFSMGH.

The protein belongs to the class-I aminoacyl-tRNA synthetase family. Monomer.

It is found in the cytoplasm. It catalyses the reaction tRNA(Arg) + L-arginine + ATP = L-arginyl-tRNA(Arg) + AMP + diphosphate. The sequence is that of Arginine--tRNA ligase 1 from Bacillus thuringiensis subsp. konkukian (strain 97-27).